The following is a 201-amino-acid chain: Cell division protein SepF (201 aa).

The segment covering 27–38 (VQERTSVQRDSR) has biased composition (basic and acidic residues). Residues 27-99 (VQERTSVQRD…PRIQNKDSVR (73 aa)) form a disordered region. 2 stretches are compositionally biased toward polar residues: residues 43-54 (QEASQRSHMTNS) and 82-92 (DNSYQQATPRI).

It belongs to the SepF family. As to quaternary structure, homodimer. Interacts with FtsZ.

The protein localises to the cytoplasm. Its function is as follows. Cell division protein that is part of the divisome complex and is recruited early to the Z-ring. Probably stimulates Z-ring formation, perhaps through the cross-linking of FtsZ protofilaments. Its function overlaps with FtsA. This chain is Cell division protein SepF, found in Streptococcus agalactiae serotype III (strain NEM316).